We begin with the raw amino-acid sequence, 486 residues long: UDP-N-acetylmuramate--L-alanine ligase (486 aa).

Glycine 129–threonine 135 is a binding site for ATP.

Belongs to the MurCDEF family.

The protein resides in the cytoplasm. The enzyme catalyses UDP-N-acetyl-alpha-D-muramate + L-alanine + ATP = UDP-N-acetyl-alpha-D-muramoyl-L-alanine + ADP + phosphate + H(+). The protein operates within cell wall biogenesis; peptidoglycan biosynthesis. Functionally, cell wall formation. This chain is UDP-N-acetylmuramate--L-alanine ligase, found in Vibrio atlanticus (strain LGP32) (Vibrio splendidus (strain Mel32)).